We begin with the raw amino-acid sequence, 311 residues long: Probable dihydroorotate dehydrogenase A (fumarate) (311 aa).

Residues Lys45, 69 to 73 (NSMGL), and Asn128 contribute to the substrate site. An FMN-binding site is contributed by 45 to 46 (KT). Position 128 (Asn128) interacts with FMN. Catalysis depends on Cys131, which acts as the Nucleophile. 2 residues coordinate FMN: Lys165 and Val193. Residue 194–195 (NS) coordinates substrate. Residues Gly220, 248–249 (GG), and 270–271 (GT) contribute to the FMN site.

Belongs to the dihydroorotate dehydrogenase family. Type 1 subfamily. Homodimer. FMN is required as a cofactor.

Its subcellular location is the cytoplasm. The enzyme catalyses (S)-dihydroorotate + fumarate = orotate + succinate. It functions in the pathway pyrimidine metabolism; UMP biosynthesis via de novo pathway. Functionally, catalyzes the conversion of dihydroorotate to orotate with fumarate as the electron acceptor. This Streptococcus pneumoniae serotype 4 (strain ATCC BAA-334 / TIGR4) protein is Probable dihydroorotate dehydrogenase A (fumarate) (pyrDA).